Consider the following 269-residue polypeptide: MKI67 FHA domain-interacting nucleolar phosphoprotein (269 aa).

Residues 45–123 (GVLYVGHLPR…RIIKCHVIPP (79 aa)) form the RRM domain. The tract at residues 234-269 (DEIVIKVKPLPENSDDVEESEEESAEEDEGEEEEAA) is disordered. The segment covering 246–269 (NSDDVEESEEESAEEDEGEEEEAA) has biased composition (acidic residues).

Its subcellular location is the nucleus. It is found in the nucleolus. Plays an essential role in early embryonic development. The sequence is that of MKI67 FHA domain-interacting nucleolar phosphoprotein (nifk) from Danio rerio (Zebrafish).